The chain runs to 433 residues: LanC-like protein GCL1 (433 aa).

The segment at 1 to 22 (MSSSVDFVTEQGRCGDDGNGAG) is disordered.

Belongs to the LanC-like protein family.

Functionally, may play a role in signaling. May be not involved in abscisic acid (ABA) signaling. The sequence is that of LanC-like protein GCL1 (GCL1) from Arabidopsis thaliana (Mouse-ear cress).